Here is a 121-residue protein sequence, read N- to C-terminus: Phosphoribosyl-ATP pyrophosphatase (121 aa).

It belongs to the PRA-PH family.

Its subcellular location is the cytoplasm. It carries out the reaction 1-(5-phospho-beta-D-ribosyl)-ATP + H2O = 1-(5-phospho-beta-D-ribosyl)-5'-AMP + diphosphate + H(+). It functions in the pathway amino-acid biosynthesis; L-histidine biosynthesis; L-histidine from 5-phospho-alpha-D-ribose 1-diphosphate: step 2/9. This is Phosphoribosyl-ATP pyrophosphatase from Nitrosospira multiformis (strain ATCC 25196 / NCIMB 11849 / C 71).